A 98-amino-acid chain; its full sequence is Small ribosomal subunit protein uS17 (98 aa).

Belongs to the universal ribosomal protein uS17 family. In terms of assembly, part of the 30S ribosomal subunit.

In terms of biological role, one of the primary rRNA binding proteins, it binds specifically to the 5'-end of 16S ribosomal RNA. The protein is Small ribosomal subunit protein uS17 of Synechococcus sp. (strain CC9605).